A 155-amino-acid polypeptide reads, in one-letter code: Ribosomal RNA large subunit methyltransferase H (155 aa).

Residues L72, G103, and 122–127 (LSTLTL) contribute to the S-adenosyl-L-methionine site.

It belongs to the RNA methyltransferase RlmH family. In terms of assembly, homodimer.

The protein resides in the cytoplasm. It carries out the reaction pseudouridine(1915) in 23S rRNA + S-adenosyl-L-methionine = N(3)-methylpseudouridine(1915) in 23S rRNA + S-adenosyl-L-homocysteine + H(+). In terms of biological role, specifically methylates the pseudouridine at position 1915 (m3Psi1915) in 23S rRNA. The polypeptide is Ribosomal RNA large subunit methyltransferase H (Klebsiella pneumoniae (strain 342)).